We begin with the raw amino-acid sequence, 1067 residues long: Dorsal-ventral patterning protein tolloid (1067 aa).

The N-terminal stretch at 1-36 is a signal peptide; sequence MKGMRLMPMKMKAKLVVLSVGALWMMMFFLVDYAEG. Residues 37–136 constitute a propeptide that is removed on maturation; the sequence is RRLSQLPESE…NGQPIQRRRR (100 aa). In terms of domain architecture, Peptidase M12A spans 136-338; it reads RAVTVRKERT…VQANLLYKCA (203 aa). N-linked (GlcNAc...) asparagine glycosylation is present at Asn176. Intrachain disulfides connect Cys179/Cys337, Cys201/Cys223, Cys203/Cys204, Cys340/Cys390, and Cys417/Cys439. His231 serves as a coordination point for Zn(2+). Residue Glu232 is part of the active site. Zn(2+)-binding residues include His235 and His241. Short sequence motifs (cell attachment site) lie at residues 245–247 and 325–327; these read RGD. CUB domains are found at residues 340–477 and 478–591; these read CGRT…FEVV and CGGD…LMLD. N-linked (GlcNAc...) asparagine glycosylation is present at Asn441. 6 disulfide bridges follow: Cys478-Cys505, Cys532-Cys554, Cys595-Cys606, Cys602-Cys615, Cys617-Cys630, and Cys634-Cys662. N-linked (GlcNAc...) asparagine glycosylation occurs at Asn543. Residues 591–631 enclose the EGF-like 1; calcium-binding domain; it reads DVDECKFTDHGCQHLCINTLGSYQCGCRAGYELQANGKTCE. Residues 634–753 form the CUB 3 domain; that stretch reads CGGVVDATKS…SGFVAKFVID (120 aa). N-linked (GlcNAc...) asparagine glycans are attached at residues Asn644 and Asn677. Cystine bridges form between Cys693/Cys716, Cys757/Cys768, Cys764/Cys777, Cys779/Cys792, Cys797/Cys823, Cys850/Cys872, Cys910/Cys940, and Cys967/Cys989. The 41-residue stretch at 753 to 793 folds into the EGF-like 2; calcium-binding domain; sequence DVDECSMNNGGCQHRCRNTFGSYQCSCRNGYTLAENGHNCT. The N-linked (GlcNAc...) asparagine glycan is linked to Asn791. CUB domains lie at 797–909 and 910–1026; these read CKFE…FVSE and CGGY…FMAV. Residues Asn864 and Asn918 are each glycosylated (N-linked (GlcNAc...) asparagine).

It depends on Zn(2+) as a cofactor.

Functionally, metalloprotease which cleaves TGF-beta family ligands daw, Actbeta and myo in vitro. Cleavage of daw enhances its signaling activity. Cleaves dorsal-ventral patterning protein sog. Processes sog more efficiently than metalloprotease tld which also cleaves sog. Required for normal dorsal development. TLD may interact physically with DPP-C protein. The chain is Dorsal-ventral patterning protein tolloid (tld) from Drosophila melanogaster (Fruit fly).